The primary structure comprises 289 residues: ATP phosphoribosyltransferase (289 aa).

Belongs to the ATP phosphoribosyltransferase family. Long subfamily. It depends on Mg(2+) as a cofactor.

Its subcellular location is the cytoplasm. It carries out the reaction 1-(5-phospho-beta-D-ribosyl)-ATP + diphosphate = 5-phospho-alpha-D-ribose 1-diphosphate + ATP. It participates in amino-acid biosynthesis; L-histidine biosynthesis; L-histidine from 5-phospho-alpha-D-ribose 1-diphosphate: step 1/9. Its activity is regulated as follows. Feedback inhibited by histidine. In terms of biological role, catalyzes the condensation of ATP and 5-phosphoribose 1-diphosphate to form N'-(5'-phosphoribosyl)-ATP (PR-ATP). Has a crucial role in the pathway because the rate of histidine biosynthesis seems to be controlled primarily by regulation of HisG enzymatic activity. The polypeptide is ATP phosphoribosyltransferase (Methanosarcina acetivorans (strain ATCC 35395 / DSM 2834 / JCM 12185 / C2A)).